A 231-amino-acid chain; its full sequence is Large ribosomal subunit protein uL1 (231 aa).

This sequence belongs to the universal ribosomal protein uL1 family. As to quaternary structure, part of the 50S ribosomal subunit.

Its function is as follows. Binds directly to 23S rRNA. The L1 stalk is quite mobile in the ribosome, and is involved in E site tRNA release. Protein L1 is also a translational repressor protein, it controls the translation of the L11 operon by binding to its mRNA. The sequence is that of Large ribosomal subunit protein uL1 from Dechloromonas aromatica (strain RCB).